Here is a 728-residue protein sequence, read N- to C-terminus: FAS1 domain-containing protein fsc1 (728 aa).

An N-terminal signal peptide occupies residues 1–21 (MNLQFRLYLLFILLFISFANG). The Vacuolar segment spans residues 22 to 670 (KNEYEDKSTS…TKRQNRWRIT (649 aa)). FAS1 domains follow at residues 29–151 (STSI…DNII) and 154–285 (PPPA…SSLI). N-linked (GlcNAc...) asparagine glycosylation occurs at Asn-89. 2 N-linked (GlcNAc...) asparagine glycosylation sites follow: Asn-404 and Asn-501. A helical transmembrane segment spans residues 671-691 (FISISGLLLSVGICVLCYKIY). Over 692–728 (FKFFRNRFMNQGEREPLLAPADSDTMAGRRNSSSLSV) the chain is Cytoplasmic.

The protein localises to the vacuole membrane. Functionally, required for the fusion of autophagosomes with the vacuole. The protein is FAS1 domain-containing protein fsc1 (fsc1) of Schizosaccharomyces pombe (strain 972 / ATCC 24843) (Fission yeast).